The primary structure comprises 1203 residues: DNA-directed RNA polymerase subunit beta (1203 aa).

A compositionally biased stretch (basic and acidic residues) spans 1174–1195 (AAQEAKAAFEAEEAEKATKAEA). The disordered stretch occupies residues 1174 to 1203 (AAQEAKAAFEAEEAEKATKAEATEEAAEQE).

The protein belongs to the RNA polymerase beta chain family. In terms of assembly, the RNAP catalytic core consists of 2 alpha, 1 beta, 1 beta' and 1 omega subunit. When a sigma factor is associated with the core the holoenzyme is formed, which can initiate transcription.

The enzyme catalyses RNA(n) + a ribonucleoside 5'-triphosphate = RNA(n+1) + diphosphate. DNA-dependent RNA polymerase catalyzes the transcription of DNA into RNA using the four ribonucleoside triphosphates as substrates. The polypeptide is DNA-directed RNA polymerase subunit beta (Streptococcus pneumoniae (strain P1031)).